The sequence spans 166 residues: Ureidoglycolate lyase (166 aa).

It belongs to the ureidoglycolate lyase family. In terms of assembly, homodimer. Ni(2+) is required as a cofactor.

The enzyme catalyses (S)-ureidoglycolate = urea + glyoxylate. The protein operates within nitrogen metabolism; (S)-allantoin degradation. Catalyzes the catabolism of the allantoin degradation intermediate (S)-ureidoglycolate, generating urea and glyoxylate. Involved in the utilization of allantoin as nitrogen source. This chain is Ureidoglycolate lyase, found in Rhizobium etli (strain CIAT 652).